A 338-amino-acid chain; its full sequence is MIWEEILNFEPYRAVEGNYRIWLDKNESPYDLPPQLKEEILEELKRIEFNRYPHITSDPLREALAEFYGLKKENIAVGNGSDELINYLVKMFKGKYIVVTSPTFGMYSFFAKLHGIPVKDIPLKEDFTIDGERIAEEGKAASAIFIASPNNPTGNSQPENEVLKVLDSGRVVILDEAYSEFSGKSFIPKISEYENLVILRTFSKAFGLAGIRCGYMIANEKIIDALYRILPPYNLNSLTMTVAIKMLEHYDIVKRRIKLIVKERERIRREFIEYSYPSEANFLLMKLDAYDYLLKKGIVVRKLSGRLEGHIRVTIGKKWENDELIKALKEFLEECRCG.

Lys204 bears the N6-(pyridoxal phosphate)lysine mark.

It belongs to the class-II pyridoxal-phosphate-dependent aminotransferase family. Histidinol-phosphate aminotransferase subfamily. Requires pyridoxal 5'-phosphate as cofactor.

The enzyme catalyses L-histidinol phosphate + 2-oxoglutarate = 3-(imidazol-4-yl)-2-oxopropyl phosphate + L-glutamate. It functions in the pathway amino-acid biosynthesis; L-histidine biosynthesis; L-histidine from 5-phospho-alpha-D-ribose 1-diphosphate: step 7/9. The protein is Histidinol-phosphate aminotransferase of Pyrococcus furiosus (strain ATCC 43587 / DSM 3638 / JCM 8422 / Vc1).